The following is a 366-amino-acid chain: MRLIVAGGGTGGHLFPGIAVAEEFLARNSANEVLFIGTERGIEARLLPKLGYRLECISASGIKGQSPLTKVKSAALLLYGYSQSRKILKEFRPDVVLGVGGYASAPVVLSARGLQIRRFIHEQNAIPGLTNKVLARIADKVFISIEESRKFFPEDRTMLTGNPLRKEILWNVQQGKTEPKGGSLRLLVFGGSAGAHRINTAMVEALPHLAKVKEHLLITHQTGEKDHGEMKKAYGAAGFNAEVTPFIDNMAAAYAAADFIVCRAGATTLAEVAVSGKACIFIPYPYAADDHQRRNAEALLKEDAGFMILERELTGDTLAGQIIRLMQEPELVEKTAANIRKFGQLDAAQVIVDEMTGKQEPLCTEK.

UDP-N-acetyl-alpha-D-glucosamine-binding positions include Thr10–Gly12, Asn124, Arg165, Ser192, Ile247, and Gln292.

It belongs to the glycosyltransferase 28 family. MurG subfamily.

It is found in the cell inner membrane. It catalyses the reaction di-trans,octa-cis-undecaprenyl diphospho-N-acetyl-alpha-D-muramoyl-L-alanyl-D-glutamyl-meso-2,6-diaminopimeloyl-D-alanyl-D-alanine + UDP-N-acetyl-alpha-D-glucosamine = di-trans,octa-cis-undecaprenyl diphospho-[N-acetyl-alpha-D-glucosaminyl-(1-&gt;4)]-N-acetyl-alpha-D-muramoyl-L-alanyl-D-glutamyl-meso-2,6-diaminopimeloyl-D-alanyl-D-alanine + UDP + H(+). Its pathway is cell wall biogenesis; peptidoglycan biosynthesis. In terms of biological role, cell wall formation. Catalyzes the transfer of a GlcNAc subunit on undecaprenyl-pyrophosphoryl-MurNAc-pentapeptide (lipid intermediate I) to form undecaprenyl-pyrophosphoryl-MurNAc-(pentapeptide)GlcNAc (lipid intermediate II). The sequence is that of UDP-N-acetylglucosamine--N-acetylmuramyl-(pentapeptide) pyrophosphoryl-undecaprenol N-acetylglucosamine transferase from Geotalea daltonii (strain DSM 22248 / JCM 15807 / FRC-32) (Geobacter daltonii).